The sequence spans 217 residues: Elongation factor Ts (217 aa).

The tract at residues 82 to 85 (TDFV) is involved in Mg(2+) ion dislocation from EF-Tu.

This sequence belongs to the EF-Ts family.

The protein localises to the cytoplasm. Its function is as follows. Associates with the EF-Tu.GDP complex and induces the exchange of GDP to GTP. It remains bound to the aminoacyl-tRNA.EF-Tu.GTP complex up to the GTP hydrolysis stage on the ribosome. The protein is Elongation factor Ts of Synechococcus sp. (strain RCC307).